The sequence spans 630 residues: 1-deoxy-D-xylulose-5-phosphate synthase (630 aa).

Thiamine diphosphate is bound by residues H72 and 113-115; that span reads GHS. D144 lines the Mg(2+) pocket. Residues 145–146, N173, Y284, and E367 each bind thiamine diphosphate; that span reads GA. A Mg(2+)-binding site is contributed by N173.

Belongs to the transketolase family. DXPS subfamily. As to quaternary structure, homodimer. Requires Mg(2+) as cofactor. Thiamine diphosphate is required as a cofactor.

The enzyme catalyses D-glyceraldehyde 3-phosphate + pyruvate + H(+) = 1-deoxy-D-xylulose 5-phosphate + CO2. It functions in the pathway metabolic intermediate biosynthesis; 1-deoxy-D-xylulose 5-phosphate biosynthesis; 1-deoxy-D-xylulose 5-phosphate from D-glyceraldehyde 3-phosphate and pyruvate: step 1/1. In terms of biological role, catalyzes the acyloin condensation reaction between C atoms 2 and 3 of pyruvate and glyceraldehyde 3-phosphate to yield 1-deoxy-D-xylulose-5-phosphate (DXP). The polypeptide is 1-deoxy-D-xylulose-5-phosphate synthase (Geobacillus thermodenitrificans (strain NG80-2)).